A 365-amino-acid polypeptide reads, in one-letter code: UDP-N-acetylglucosamine--N-acetylmuramyl-(pentapeptide) pyrophosphoryl-undecaprenol N-acetylglucosamine transferase (365 aa).

Residues 17–19 (TGG), asparagine 129, arginine 167, serine 194, isoleucine 250, 269–274 (ALTVSE), and glutamine 295 contribute to the UDP-N-acetyl-alpha-D-glucosamine site.

The protein belongs to the glycosyltransferase 28 family. MurG subfamily.

The protein resides in the cell inner membrane. The catalysed reaction is di-trans,octa-cis-undecaprenyl diphospho-N-acetyl-alpha-D-muramoyl-L-alanyl-D-glutamyl-meso-2,6-diaminopimeloyl-D-alanyl-D-alanine + UDP-N-acetyl-alpha-D-glucosamine = di-trans,octa-cis-undecaprenyl diphospho-[N-acetyl-alpha-D-glucosaminyl-(1-&gt;4)]-N-acetyl-alpha-D-muramoyl-L-alanyl-D-glutamyl-meso-2,6-diaminopimeloyl-D-alanyl-D-alanine + UDP + H(+). The protein operates within cell wall biogenesis; peptidoglycan biosynthesis. Cell wall formation. Catalyzes the transfer of a GlcNAc subunit on undecaprenyl-pyrophosphoryl-MurNAc-pentapeptide (lipid intermediate I) to form undecaprenyl-pyrophosphoryl-MurNAc-(pentapeptide)GlcNAc (lipid intermediate II). The chain is UDP-N-acetylglucosamine--N-acetylmuramyl-(pentapeptide) pyrophosphoryl-undecaprenol N-acetylglucosamine transferase from Shewanella piezotolerans (strain WP3 / JCM 13877).